Consider the following 338-residue polypeptide: Fructose-1,6-bisphosphatase class 1 (338 aa).

Mg(2+) is bound by residues Glu-91, Asp-113, Leu-115, and Asp-116. Substrate is bound by residues 116–119 (DGSS), Asn-208, and Lys-274. Glu-280 is a binding site for Mg(2+).

Belongs to the FBPase class 1 family. In terms of assembly, homotetramer. Requires Mg(2+) as cofactor.

It is found in the cytoplasm. The catalysed reaction is beta-D-fructose 1,6-bisphosphate + H2O = beta-D-fructose 6-phosphate + phosphate. Its pathway is carbohydrate biosynthesis; gluconeogenesis. The chain is Fructose-1,6-bisphosphatase class 1 from Ralstonia pickettii (strain 12J).